A 157-amino-acid polypeptide reads, in one-letter code: DNA gyrase inhibitor (157 aa).

This sequence belongs to the DNA gyrase inhibitor family. Interacts with DNA gyrase.

It is found in the cytoplasm. In terms of biological role, inhibits the supercoiling activity of DNA gyrase. Acts by inhibiting DNA gyrase at an early step, prior to (or at the step of) binding of DNA by the gyrase. It protects cells against toxins that target DNA gyrase, by inhibiting activity of these toxins and reducing the formation of lethal double-strand breaks in the cell. The chain is DNA gyrase inhibitor from Cronobacter turicensis (strain DSM 18703 / CCUG 55852 / LMG 23827 / z3032).